Reading from the N-terminus, the 588-residue chain is Autophagy-related protein 22-1 (588 aa).

Residues tyrosine 35 to leucine 55 form a helical membrane-spanning segment. Asparagine 84 carries an N-linked (GlcNAc...) asparagine glycan. Transmembrane regions (helical) follow at residues threonine 109–isoleucine 129, leucine 144–proline 164, and leucine 168–leucine 188. Asparagine 255 carries N-linked (GlcNAc...) asparagine glycosylation. The next 8 membrane-spanning stretches (helical) occupy residues glycine 270 to valine 290, leucine 301 to leucine 321, isoleucine 365 to threonine 385, alanine 399 to tryptophan 419, isoleucine 434 to proline 454, phenylalanine 471 to glycine 493, leucine 507 to threonine 527, and alanine 536 to alanine 556.

It belongs to the ATG22 family.

The protein resides in the vacuole membrane. In terms of biological role, vacuolar effluxer which mediate the efflux of amino acids resulting from autophagic degradation. The release of autophagic amino acids allows the maintenance of protein synthesis and viability during nitrogen starvation. The sequence is that of Autophagy-related protein 22-1 (atg22-1) from Emericella nidulans (strain FGSC A4 / ATCC 38163 / CBS 112.46 / NRRL 194 / M139) (Aspergillus nidulans).